Reading from the N-terminus, the 467-residue chain is Na(+)/H(+) exchange regulatory cofactor-like protein nrfl-1 (467 aa).

PDZ domains lie at 12-94 and 143-225; these read RLCV…ISEE and LAEL…ASED. The disordered stretch occupies residues 344 to 429; sequence MSSHTEVLPP…ASSTSGYDDD (86 aa). A compositionally biased stretch (polar residues) spans 407–425; sequence PSPLSNGSSHGYAASSTSG.

Interacts (via PDZ 2 domain) with aat-6 (via PDZ-binding motif); the interaction sequesters aat-6 to the apical cell membrane of intestinal cells. Post-translationally, phosphorylated. As to expression, expressed in the excretory canal and intestine. Expressed on the apical cell membrane of intestinal cells (at protein level).

Its subcellular location is the cell projection. The protein resides in the microvillus membrane. It localises to the apical cell membrane. Its function is as follows. Scaffold protein that connects plasma membrane proteins with members of the ezrin/moesin/radixin family and thereby helps to link them to the actin cytoskeleton and to regulate their surface expression. Anchors the amino acid transporter protein aat-6 to the apical cell membrane of intestinal cells, particularly in older animals, in order to maintain amino acid homeostasis. May play a role in promoting fertility. The polypeptide is Na(+)/H(+) exchange regulatory cofactor-like protein nrfl-1 (Caenorhabditis elegans).